The primary structure comprises 384 residues: MVFYHRQGELPKKRHTVFMKDGKLMREEVFGLNGFNGRYSLLYHLNPPTRIMKLGEWKSNTIGEWKDAEYRHHKLSTSKLRKSSDVFLDRIALIFNDNLIISFSKVDEGDTKLFYRNADFDEIYYVHSGEILFKSVFGEIEVKEGDYLVIPRGTTYTLSFKKNAELFIIEGKQIEVPKDYRNEYGQLVEGSFYYNRDLKLPVLRTYDENGNYKLVIKTVNGFQLVELDTHPFDVVGWDGYLYPFALSVYDLEPITGKLHQPPTAYTTFAADDFVVCTFVPRLFDYHPQSVPISYYHNNIDAEEIIFYSSGQFMSRRGINKGDITLHRGGHIHGPQPSAVEASLNKRGTYNDEVAIMVETQKRVKVSIYAKEIDDPTYPLSWYTS.

The Fe cation site is built by His-296, Glu-302, and His-332.

Belongs to the homogentisate dioxygenase family. The cofactor is Fe cation.

This chain is Putative dioxygenase SSO1533, found in Saccharolobus solfataricus (strain ATCC 35092 / DSM 1617 / JCM 11322 / P2) (Sulfolobus solfataricus).